Reading from the N-terminus, the 657-residue chain is uncharacterized protein (657 aa).

Residues Ser518 and His631 each act as charge relay system in the active site.

Belongs to the peptidase S9C family.

This is an uncharacterized protein from Bacillus subtilis (strain 168).